The following is a 759-amino-acid chain: Short transient receptor potential channel 1 (759 aa).

The disordered stretch occupies residues methionine 1–glutamate 30. The Cytoplasmic segment spans residues methionine 1 to lysine 311. Residues serine 15–proline 28 are compositionally biased toward low complexity. 3 ANK repeats span residues leucine 46–leucine 75, leucine 83–glutamine 109, and methionine 124–lysine 146. 4 residues coordinate Zn(2+): histidine 155, cysteine 159, cysteine 161, and cysteine 164. An intramembrane region (discontinuously helical) is located at residues proline 312 to isoleucine 345. Topologically, residues isoleucine 346 to lysine 352 are cytoplasmic. The chain crosses the membrane as a helical span at residues phenylalanine 353–tyrosine 370. At serine 371 to arginine 388 the chain is on the extracellular side. A helical transmembrane segment spans residues isoleucine 389–isoleucine 405. Topologically, residues lysine 406–arginine 421 are cytoplasmic. Residues asparagine 422–valine 441 form a helical membrane-spanning segment. The Extracellular segment spans residues alanine 442–leucine 462. Residues valine 463–tyrosine 483 traverse the membrane as a helical segment. The Cytoplasmic segment spans residues threonine 484–aspartate 502. The chain crosses the membrane as a helical span at residues phenylalanine 503–leucine 524. The Extracellular portion of the chain corresponds to tyrosine 525 to alanine 589. Cysteine 537 and cysteine 542 are disulfide-bonded. A helical membrane pass occupies residues valine 590 to methionine 610. The Cytoplasmic portion of the chain corresponds to leucine 611 to asparagine 759.

It belongs to the transient receptor (TC 1.A.4) family. STrpC subfamily. TRPC1 sub-subfamily. As to quaternary structure, heterotetramer with TRPC4 and/or TRPC5. Forms a heteromeric ion channel with TRPC4, with a 1:3 TRPC1:TRPC4 stoichiometry. Unlike other TRP channel proteins, does not form a homomeric channel. Interacts with TRPC4AP. Interacts with ITPR3. Interacts with MX1 and RNF24. Interacts with FKBP4. Interacts with PLSCR1. Interacts with PKD2L2. Forms a heterotetramer with PKD2 with a 2:2 stoichiometry; has distinct channel properties separate from PKD2 or TRPC1 homomers alone. In terms of processing, activation of PRKCA induces phosphorylation of TRPC1 and subsequent Ca2+ entry into cells. Expressed in brain, hippocampus, amygdala, Purkinje cells and single neurons in the cortex and striatum.

It is found in the cell membrane. The catalysed reaction is Ca(2+)(in) = Ca(2+)(out). It catalyses the reaction Na(+)(in) = Na(+)(out). It carries out the reaction Li(+)(in) = Li(+)(out). The enzyme catalyses Cs(+)(in) = Cs(+)(out). With respect to regulation, may be operated by a phosphatidylinositol second messenger system activated by receptor tyrosine kinases or G-protein coupled receptors. Also activated by intracellular calcium store depletion. Functionally, forms a receptor-activated non-selective calcium permeant cation channel. Forms a heteromeric ion channel with TRPC4 or TRPC5 that has reduced calcium permeability compared to the homomeric TRPC4 or TRPC5 channel. Also permeable to monovalent ions including sodium, lithium and cesium ions. The chain is Short transient receptor potential channel 1 (Trpc1) from Rattus norvegicus (Rat).